The following is a 562-amino-acid chain: Dihydroxy-acid dehydratase (562 aa).

Asp80 serves as a coordination point for Mg(2+). Cys121 lines the [2Fe-2S] cluster pocket. Positions 122 and 123 each coordinate Mg(2+). Residue Lys123 is modified to N6-carboxylysine. Cys194 lines the [2Fe-2S] cluster pocket. Mg(2+) is bound at residue Glu446. Catalysis depends on Ser472, which acts as the Proton acceptor.

Belongs to the IlvD/Edd family. In terms of assembly, homodimer. [2Fe-2S] cluster is required as a cofactor. Requires Mg(2+) as cofactor.

The catalysed reaction is (2R)-2,3-dihydroxy-3-methylbutanoate = 3-methyl-2-oxobutanoate + H2O. It carries out the reaction (2R,3R)-2,3-dihydroxy-3-methylpentanoate = (S)-3-methyl-2-oxopentanoate + H2O. It functions in the pathway amino-acid biosynthesis; L-isoleucine biosynthesis; L-isoleucine from 2-oxobutanoate: step 3/4. Its pathway is amino-acid biosynthesis; L-valine biosynthesis; L-valine from pyruvate: step 3/4. In terms of biological role, functions in the biosynthesis of branched-chain amino acids. Catalyzes the dehydration of (2R,3R)-2,3-dihydroxy-3-methylpentanoate (2,3-dihydroxy-3-methylvalerate) into 2-oxo-3-methylpentanoate (2-oxo-3-methylvalerate) and of (2R)-2,3-dihydroxy-3-methylbutanoate (2,3-dihydroxyisovalerate) into 2-oxo-3-methylbutanoate (2-oxoisovalerate), the penultimate precursor to L-isoleucine and L-valine, respectively. This is Dihydroxy-acid dehydratase from Staphylococcus aureus (strain bovine RF122 / ET3-1).